We begin with the raw amino-acid sequence, 415 residues long: Putative serine/threonine-protein phosphatase 4 regulatory subunit 1-like (415 aa).

HEAT repeat units follow at residues 86–124 (VMEI…SNFP), 163–202 (LLPR…TEKF), 203–241 (LIPK…RRTQ), and 242–280 (LFPL…RAGL). Residues 301–318 (FASGSPAPSSGGNTSPAS) are compositionally biased toward low complexity. The interval 301–362 (FASGSPAPSS…GPAESPVESC (62 aa)) is disordered.

May be a regulatory subunit of serine/threonine-protein phosphatase 4. This Homo sapiens (Human) protein is Putative serine/threonine-protein phosphatase 4 regulatory subunit 1-like (PPP4R1L).